The sequence spans 425 residues: Receptor-like protein 55 (425 aa).

The first 25 residues, 1-25 (MKPQQPQPPLLLLLLLPLLLTTVSS), serve as a signal peptide directing secretion. Over 26–397 (YPLNPKQLKA…EEEHKGSNKT (372 aa)) the chain is Extracellular. N-linked (GlcNAc...) asparagine glycosylation is found at N40, N54, N79, and N132. LRR repeat units lie at residues 144–169 (LKNL…ILGN), 170–193 (MHKL…SFHS), 195–216 (LRYI…ITRL), 217–240 (KNLK…IKSL), 242–264 (FLKN…LSSI), 265–287 (SELT…FFSE), and 288–313 (MKNL…SFIK). N-linked (GlcNAc...) asparagine glycans are attached at residues N182, N202, N223, N245, N278, N308, and N329. The interval 355-389 (PSQKEESLSGENDYDVEGGNEEKTENLKTKEEEEE) is disordered. A compositionally biased stretch (basic and acidic residues) spans 374-389 (NEEKTENLKTKEEEEE). Residue N395 is glycosylated (N-linked (GlcNAc...) asparagine). The helical transmembrane segment at 398–418 (LFGLGIGLFSLVFLILFLFYL) threads the bilayer. Residues 419–425 (AKRCRLI) are Cytoplasmic-facing.

The protein belongs to the RLP family.

The protein resides in the cell membrane. Functionally, involved in plant defense. This chain is Receptor-like protein 55, found in Arabidopsis thaliana (Mouse-ear cress).